The following is a 403-amino-acid chain: Basic leucine zipper 25 (403 aa).

2 disordered regions span residues 13–128 (SFWP…APVV) and 156–259 (VKPE…EFDT). The span at 24 to 33 (PGSSSTPSPT) shows a compositional bias: low complexity. A compositionally biased stretch (polar residues) spans 56-69 (LSGSDSSPTTNTIE). Composition is skewed to low complexity over residues 115–128 (APSS…APVV) and 161–174 (SSAS…AQGS). Over residues 175-195 (IVAQTSPGASSVRFSPTTSTQ) the composition is skewed to polar residues. The segment covering 212-226 (DSDDDDLDGDADNGD) has biased composition (acidic residues). Residue Ser-213 is modified to Phosphoserine. The bZIP domain maps to 229–292 (DVKRARRMLS…DAAAVDNRIL (64 aa)). A basic motif region spans residues 231–250 (KRARRMLSNRESARRSRRRK). A Nuclear localization signal motif is present at residues 233–240 (ARRMLSNR). Residues 264–271 (LRAEHSTL) form a leucine-zipper region. A compositionally biased stretch (low complexity) spans 332-345 (NTPSASSSIPPNSN). Disordered stretches follow at residues 332-361 (NTPS…SAGL) and 380-403 (EGMQ…NHKH). Residues 351 to 361 (ANSSTNTSAGL) show a composition bias toward polar residues.

The protein belongs to the bZIP family. Homodimer. Forms a heterodimer with BZIP1, BZIP1, BZIP2, BZIP9, BZIP11, BZIP44, BZIP53 and BZIP63. Interacts with ABI3 and forms a complex made of ABI3, BZIP53 and BZIP25. In terms of tissue distribution, expressed in roots, shoots, stems, leaves, stipulae, siliques, seeds, pollen, and flowers.

Its subcellular location is the nucleus. Transcription factor that binds to the 5'-ACGT-3' box, especially present in G-box-like motif (5'-CCACGTGGCC-3'), ABRE elements, of seed storage protein (SSP) encoding gene promoters (e.g. At2S and CRU3) and promotes their expression in seeds when in complex with ABI3 and BZIP53. The sequence is that of Basic leucine zipper 25 (BZIP25) from Arabidopsis thaliana (Mouse-ear cress).